The sequence spans 109 residues: Spermidine export protein MdtI (109 aa).

4 helical membrane passes run 6 to 26, 36 to 56, 64 to 84, and 88 to 108; these read WIHG…NVLL, CYGI…SQAV, AYAL…WVLF, and LNPK…MIKF.

Belongs to the drug/metabolite transporter (DMT) superfamily. Small multidrug resistance (SMR) (TC 2.A.7.1) family. MdtI subfamily. As to quaternary structure, forms a complex with MdtJ.

It localises to the cell inner membrane. Its function is as follows. Catalyzes the excretion of spermidine. This Salmonella choleraesuis (strain SC-B67) protein is Spermidine export protein MdtI.